The sequence spans 336 residues: Ketoreductase adrE (336 aa).

Y171 contacts NADP(+).

It belongs to the NAD(P)-dependent epimerase/dehydratase family. Dihydroflavonol-4-reductase subfamily.

The protein operates within secondary metabolite biosynthesis; terpenoid biosynthesis. In terms of biological role, ketoreductase; part of the gene cluster that mediates the biosynthesis of andrastins, meroterpenoid compounds that exhibit inhibitory activity against ras farnesyltransferase, suggesting that they could be promising leads for antitumor agents. The first step of the pathway is the synthesis of 3,5-dimethylorsellinic acid (DMOA) by the polyketide synthase adrD via condensation of one acetyl-CoA starter unit with 3 malonyl-CoA units and 2 methylations. DMAO is then converted to farnesyl-DMAO by the prenyltransferase adrG. The methyltransferase adrK catalyzes the methylation of the carboxyl group of farnesyl-DMAO to farnesyl-DMAO methyl ester which is further converted to epoxyfarnesyl-DMAO methyl ester by the FAD-dependent monooxygenase adrH. The terpene cyclase adrI then catalyzes the carbon skeletal rearrangement to generate the andrastin E, the first compound in the pathway having the andrastin scaffold, with the tetracyclic ring system. The post-cyclization tailoring enzymes adrF, adrE, adrJ, and adrA, are involved in the conversion of andrastin E into andrastin A. The short chain dehydrogenase adrF is responsible for the oxidation of the C-3 a hydroxyl group of andrastin E to yield the corresponding ketone, andrastin D. The ketoreductase adrE stereoselectively reduces the carbonyl moiety to reverse the stereochemistry of the C-3 position to yield andrastin F. The acetyltransferase adrJ is the acetyltransferase that attaches the acetyl group to the C-3 hydroxyl group of andrastin F to yield andrastin C. Finally, the cytochrome P450 monooxygenase adrA catalyzes two sequential oxidation reactions of the C-23 methyl group, to generate the corresponding alcohol andrastin B, and aldehyde andrastin A. The sequence is that of Ketoreductase adrE from Penicillium rubens (strain ATCC 28089 / DSM 1075 / NRRL 1951 / Wisconsin 54-1255) (Penicillium chrysogenum).